We begin with the raw amino-acid sequence, 361 residues long: DNA replication and repair protein RecF (361 aa).

Residue 30-37 (GANGSGKT) coordinates ATP.

Belongs to the RecF family.

The protein resides in the cytoplasm. The RecF protein is involved in DNA metabolism; it is required for DNA replication and normal SOS inducibility. RecF binds preferentially to single-stranded, linear DNA. It also seems to bind ATP. This is DNA replication and repair protein RecF from Glaesserella parasuis serovar 5 (strain SH0165) (Haemophilus parasuis).